The sequence spans 397 residues: Major outer membrane porin, serovar L3 (397 aa).

The first 22 residues, 1–22 (MKKLLKSVLVFAALSSASSLQA), serve as a signal peptide directing secretion.

It belongs to the chlamydial porin (CP) (TC 1.B.2) family. Part of a disulfide cross-linked outer membrane complex (COMC) composed of the major outer membrane porin (MOMP), the small cysteine-rich protein (OmcA) and the large cysteine-rich periplasmic protein (OmcB).

The protein localises to the cell outer membrane. Functionally, in elementary bodies (EBs, the infectious stage, which is able to survive outside the host cell) provides the structural integrity of the outer envelope through disulfide cross-links with the small cysteine-rich protein and the large cysteine-rich periplasmic protein. It has been described in publications as the Sarkosyl-insoluble COMC (Chlamydia outer membrane complex), and serves as the functional equivalent of peptidoglycan. Its function is as follows. Permits diffusion of specific solutes through the outer membrane. This Chlamydia trachomatis protein is Major outer membrane porin, serovar L3 (ompA).